Here is a 540-residue protein sequence, read N- to C-terminus: MGPGERAGGGGDAGKGNAAGGGGGGRSATTAGSRAVSALCLLLSVGSAAACLLLGVQAAALQGRVAALEEERELLRRAGPPGALDAWAEPHLERLLREKLDGLAKIRTAREAPSECVCPPGPPGRRGKPGRRGDPGPPGQSGRDGYPGPLGLDGKPGLPGPKGEKGAPGDFGPRGDQGQDGAAGPPGPPGPPGARGPPGDTGKDGPRGAQGPAGPKGEPGQDGEMGPKGPPGPKGEPGVPGKKGDDGTPSQPGPPGPKGEPGSMGPRGENGVDGAPGPKGEPGHRGTDGAAGPRGAPGLKGEQGDTVVIDYDGRILDALKGPPGPQGPPGPPGIPGAKGELGLPGAPGIDGEKGPKGQKGDPGEPGPAGLKGEAGEMGLSGLPGADGLKGEKGESASDSLQESLAQLIVEPGPPGPPGPPGPMGLQGIQGPKGLDGAKGEKGASGERGPSGLPGPVGPPGLIGLPGTKGEKGRPGEPGLDGFPGPRGEKGDRSERGEKGERGVPGRKGVKGQKGEPGPPGLDQPCPVGPDGLPVPGCWHK.

Gly residues predominate over residues 1–26 (MGPGERAGGGGDAGKGNAAGGGGGGR). The tract at residues 1-28 (MGPGERAGGGGDAGKGNAAGGGGGGRSA) is disordered. Residues 1 to 34 (MGPGERAGGGGDAGKGNAAGGGGGGRSATTAGSR) are Cytoplasmic-facing. The chain crosses the membrane as a helical; Signal-anchor for type II membrane protein span at residues 35-56 (AVSALCLLLSVGSAAACLLLGV). Residues 57 to 540 (QAAALQGRVA…GLPVPGCWHK (484 aa)) are Extracellular-facing. 2 disordered regions span residues 109-304 (AREA…GEQG) and 316-540 (LDAL…CWHK). Collagen-like domains follow at residues 124-243 (GRRG…PGKK), 251-305 (QPGP…EQGD), 321-380 (GPPG…MGLS), 412-460 (GPPG…GPPG), and 463-522 (GLPG…PGLD). 2 stretches are compositionally biased toward low complexity: residues 140–156 (QSGR…DGKP) and 168–183 (PGDF…DGAA). Residues 185–195 (PPGPPGPPGAR) are compositionally biased toward pro residues. The span at 322-334 (PPGPQGPPGPPGI) shows a compositional bias: pro residues. Residues 350 to 362 (DGEKGPKGQKGDP) show a composition bias toward basic and acidic residues. Pro residues predominate over residues 411–422 (PGPPGPPGPPGP). Basic and acidic residues-rich tracts occupy residues 435–444 (DGAKGEKGAS) and 486–503 (RGEK…ERGV).

Homotrimer. Undergoes proteolytic cleavage by furin protease to yield a 60 kDa soluble form that forms a homotrimer and exhibits a low affinity interaction with heparin.

It is found in the cell membrane. The sequence is that of Collagen alpha-1(XXIII) chain (COL23A1) from Homo sapiens (Human).